A 177-amino-acid chain; its full sequence is Dual-action ribosomal maturation protein DarP (177 aa).

Basic and acidic residues predominate over residues 1-12 (MKIVGDSEHFKQ). The disordered stretch occupies residues 1 to 26 (MKIVGDSEHFKQPYDSNDEYVSKTED).

This sequence belongs to the DarP family.

It localises to the cytoplasm. Functionally, member of a network of 50S ribosomal subunit biogenesis factors which assembles along the 30S-50S interface, preventing incorrect 23S rRNA structures from forming. Promotes peptidyl transferase center (PTC) maturation. In Shewanella oneidensis (strain ATCC 700550 / JCM 31522 / CIP 106686 / LMG 19005 / NCIMB 14063 / MR-1), this protein is Dual-action ribosomal maturation protein DarP.